Here is a 513-residue protein sequence, read N- to C-terminus: Ribonuclease Y (513 aa).

A helical transmembrane segment spans residues 3 to 23 (IGTLLLFTFLGLVAGATAVWL). Residues 77–96 (LQSVESKLKSREQTLNQRQE) form a disordered region. Basic and acidic residues predominate over residues 82–96 (SKLKSREQTLNQRQE). The 61-residue stretch at 203 to 263 (SVTVFHIESD…VRREIARLAL (61 aa)) folds into the KH domain. An HD domain is found at 329 to 422 (LLQHSRETAN…VQVCDAISGA (94 aa)).

The protein belongs to the RNase Y family.

It is found in the cell membrane. Endoribonuclease that initiates mRNA decay. This Porphyromonas gingivalis (strain ATCC BAA-308 / W83) protein is Ribonuclease Y.